We begin with the raw amino-acid sequence, 267 residues long: Undecaprenyl-diphosphatase (267 aa).

The next 7 helical transmembrane spans lie at 1 to 21 (MTLW…FLPI), 39 to 59 (AGVA…LFYY), 85 to 105 (AKLG…GFMV), 117 to 137 (LLIA…DFWG), 189 to 209 (FSFL…LWKL), 220 to 240 (LIAL…ALFI), and 246 to 266 (VGMM…FFVF).

This sequence belongs to the UppP family.

It localises to the cell inner membrane. The enzyme catalyses di-trans,octa-cis-undecaprenyl diphosphate + H2O = di-trans,octa-cis-undecaprenyl phosphate + phosphate + H(+). In terms of biological role, catalyzes the dephosphorylation of undecaprenyl diphosphate (UPP). Confers resistance to bacitracin. The chain is Undecaprenyl-diphosphatase from Dichelobacter nodosus (strain VCS1703A).